Here is a 225-residue protein sequence, read N- to C-terminus: Probable GTP-binding protein EngB (225 aa).

An EngB-type G domain is found at 31 to 204 (VGVEIAFAGR…LGILDSWCKP (174 aa)). GTP contacts are provided by residues 39–46 (GRSNAGKS), 65–69 (GRTQL), 83–86 (DLPG), 150–153 (TKAD), and 183–185 (FSS). Residues serine 46 and threonine 67 each coordinate Mg(2+).

The protein belongs to the TRAFAC class TrmE-Era-EngA-EngB-Septin-like GTPase superfamily. EngB GTPase family. It depends on Mg(2+) as a cofactor.

Its function is as follows. Necessary for normal cell division and for the maintenance of normal septation. The sequence is that of Probable GTP-binding protein EngB from Shewanella pealeana (strain ATCC 700345 / ANG-SQ1).